The sequence spans 708 residues: UvrABC system protein B (708 aa).

One can recognise a Helicase ATP-binding domain in the interval 32–419 (EGIQSGKTAQ…GGEVVEQIIR (388 aa)). 45-52 (GATGTGKT) contributes to the ATP binding site. The short motif at 98 to 121 (YYDYYQPEAYIPQRDVYIEKDSSI) is the Beta-hairpin element. The Helicase C-terminal domain maps to 436–598 (QVTHLLEQVR…IVPKTVRKSI (163 aa)). In terms of domain architecture, UVR spans 627–662 (IEYVDKLEQEMLAAAEDLEFERAARLRDRVLQLKEH). A disordered region spans residues 668-708 (SEVEIVDEKSAGKSGGRGRGRRGAKKKGASKGTKIPRPKRG). Residues 683–708 (GRGRGRRGAKKKGASKGTKIPRPKRG) are compositionally biased toward basic residues.

It belongs to the UvrB family. Forms a heterotetramer with UvrA during the search for lesions. Interacts with UvrC in an incision complex.

It localises to the cytoplasm. The UvrABC repair system catalyzes the recognition and processing of DNA lesions. A damage recognition complex composed of 2 UvrA and 2 UvrB subunits scans DNA for abnormalities. Upon binding of the UvrA(2)B(2) complex to a putative damaged site, the DNA wraps around one UvrB monomer. DNA wrap is dependent on ATP binding by UvrB and probably causes local melting of the DNA helix, facilitating insertion of UvrB beta-hairpin between the DNA strands. Then UvrB probes one DNA strand for the presence of a lesion. If a lesion is found the UvrA subunits dissociate and the UvrB-DNA preincision complex is formed. This complex is subsequently bound by UvrC and the second UvrB is released. If no lesion is found, the DNA wraps around the other UvrB subunit that will check the other stand for damage. The sequence is that of UvrABC system protein B from Rhodopirellula baltica (strain DSM 10527 / NCIMB 13988 / SH1).